The following is a 246-amino-acid chain: tRNA (guanine-N(7)-)-methyltransferase (246 aa).

The disordered stretch occupies residues 1–23 (MIESSSPTPPALHEGAPADVSHP). 4 residues coordinate S-adenosyl-L-methionine: Glu-75, Glu-100, Asp-127, and Asp-150. Asp-150 is a catalytic residue. Position 154 (Lys-154) interacts with substrate. The interval 156-161 (KHNKRR) is interaction with RNA. Substrate contacts are provided by residues Asp-186 and 225-228 (TKFE).

The protein belongs to the class I-like SAM-binding methyltransferase superfamily. TrmB family.

The catalysed reaction is guanosine(46) in tRNA + S-adenosyl-L-methionine = N(7)-methylguanosine(46) in tRNA + S-adenosyl-L-homocysteine. The protein operates within tRNA modification; N(7)-methylguanine-tRNA biosynthesis. Functionally, catalyzes the formation of N(7)-methylguanine at position 46 (m7G46) in tRNA. This Polaromonas naphthalenivorans (strain CJ2) protein is tRNA (guanine-N(7)-)-methyltransferase.